Reading from the N-terminus, the 486-residue chain is Glutamyl-tRNA(Gln) amidotransferase subunit A (486 aa).

Catalysis depends on charge relay system residues Lys-78 and Ser-153. Residue Ser-177 is the Acyl-ester intermediate of the active site.

Belongs to the amidase family. GatA subfamily. As to quaternary structure, heterotrimer of A, B and C subunits.

The catalysed reaction is L-glutamyl-tRNA(Gln) + L-glutamine + ATP + H2O = L-glutaminyl-tRNA(Gln) + L-glutamate + ADP + phosphate + H(+). Allows the formation of correctly charged Gln-tRNA(Gln) through the transamidation of misacylated Glu-tRNA(Gln) in organisms which lack glutaminyl-tRNA synthetase. The reaction takes place in the presence of glutamine and ATP through an activated gamma-phospho-Glu-tRNA(Gln). The sequence is that of Glutamyl-tRNA(Gln) amidotransferase subunit A from Desulfosudis oleivorans (strain DSM 6200 / JCM 39069 / Hxd3) (Desulfococcus oleovorans).